A 517-amino-acid polypeptide reads, in one-letter code: MFSLQDLCRKHLFILPDVFGEHVLQRLGLYWKCHGSLQRIGDDHILIRRDLILSTNEALRMAGEEGNNEVVKLLLLWKGNLHYAIIGALQGDQYDLIHKYENQIGDFHLILPLIQDAKTFEKCHALERFCGVSCLLKHATKYNMLPILQTYQEELSMRVYLRETLFELACLWQRYDVLKWIEQTMHVYDLKVMFNIAISKRDLTMYSLGYILLFDRENTEATLLTQHLEKTAAKGLLHFVLETLKYGGNIDIVLSQAVKYNHRKLLDYFLRQLPRKHIEKFLLLAVQEKASKKTLNLLLSHLNYSVKRIKKLLRYVIEYESTLVIKILLKKRVNLIDAMLEKMVRYFSATKVKTIMDELSISPERVIKMAIQKMRTDIVIHTSYIWEDDLERLTRLKDMVYTIKYEHGKKMLIKVMHGIYKNLLYDEREKVMFHLAKLYVAQNAATQFRDICKDCYRLDLARFKPRFKQLMLDCLEIVTKKSCYSILEILEKHIISLFTMKVMTEEEKNLCLEILYK.

This sequence belongs to the asfivirus MGF 505 family.

In terms of biological role, plays a role in virus cell tropism, and may be required for efficient virus replication in macrophages. The chain is Protein MGF 505-2R from African swine fever virus (isolate Warthog/Namibia/Wart80/1980) (ASFV).